The primary structure comprises 463 residues: Argininosuccinate lyase (463 aa).

This sequence belongs to the lyase 1 family. Argininosuccinate lyase subfamily.

The protein resides in the cytoplasm. The catalysed reaction is 2-(N(omega)-L-arginino)succinate = fumarate + L-arginine. It participates in amino-acid biosynthesis; L-arginine biosynthesis; L-arginine from L-ornithine and carbamoyl phosphate: step 3/3. This Chlorobaculum parvum (strain DSM 263 / NCIMB 8327) (Chlorobium vibrioforme subsp. thiosulfatophilum) protein is Argininosuccinate lyase.